The primary structure comprises 435 residues: Citrate synthase (435 aa).

Catalysis depends on residues His-311 and Asp-370.

The protein belongs to the citrate synthase family.

The enzyme catalyses oxaloacetate + acetyl-CoA + H2O = citrate + CoA + H(+). It participates in carbohydrate metabolism; tricarboxylic acid cycle; isocitrate from oxaloacetate: step 1/2. This is Citrate synthase (gltA) from Rickettsia bellii (strain RML369-C).